Consider the following 342-residue polypeptide: Succinylglutamate desuccinylase (342 aa).

Residues His-63, Glu-66, and His-155 each coordinate Zn(2+). Glu-219 is an active-site residue.

It belongs to the AspA/AstE family. Succinylglutamate desuccinylase subfamily. Zn(2+) serves as cofactor.

The enzyme catalyses N-succinyl-L-glutamate + H2O = L-glutamate + succinate. Its pathway is amino-acid degradation; L-arginine degradation via AST pathway; L-glutamate and succinate from L-arginine: step 5/5. Transforms N(2)-succinylglutamate into succinate and glutamate. This Vibrio parahaemolyticus serotype O3:K6 (strain RIMD 2210633) protein is Succinylglutamate desuccinylase.